We begin with the raw amino-acid sequence, 361 residues long: Chorismate synthase (361 aa).

NADP(+) contacts are provided by Arg48 and Arg54. Residues 125–127 (RSS), 238–239 (NA), Gly278, 293–297 (KPTSS), and Arg319 each bind FMN.

Belongs to the chorismate synthase family. As to quaternary structure, homotetramer. It depends on FMNH2 as a cofactor.

The enzyme catalyses 5-O-(1-carboxyvinyl)-3-phosphoshikimate = chorismate + phosphate. It functions in the pathway metabolic intermediate biosynthesis; chorismate biosynthesis; chorismate from D-erythrose 4-phosphate and phosphoenolpyruvate: step 7/7. Catalyzes the anti-1,4-elimination of the C-3 phosphate and the C-6 proR hydrogen from 5-enolpyruvylshikimate-3-phosphate (EPSP) to yield chorismate, which is the branch point compound that serves as the starting substrate for the three terminal pathways of aromatic amino acid biosynthesis. This reaction introduces a second double bond into the aromatic ring system. The polypeptide is Chorismate synthase (Salmonella dublin (strain CT_02021853)).